The sequence spans 128 residues: uncharacterized protein (128 aa).

Residues M1–P126 enclose the VOC domain.

This is an uncharacterized protein from Bacillus subtilis (strain 168).